We begin with the raw amino-acid sequence, 409 residues long: Tyrosine--tRNA ligase (409 aa).

Residue Tyr-35 coordinates L-tyrosine. Positions 40–49 (PTGSSLHVGH) match the 'HIGH' region motif. The L-tyrosine site is built by Tyr-168 and Gln-172. The short motif at 228-232 (KMGKT) is the 'KMSKS' region element. Lys-231 contributes to the ATP binding site. The S4 RNA-binding domain maps to 339 to 404 (IKVTDLFVQV…AGKKRVVRIV (66 aa)).

It belongs to the class-I aminoacyl-tRNA synthetase family. TyrS type 1 subfamily. Homodimer.

It is found in the cytoplasm. It catalyses the reaction tRNA(Tyr) + L-tyrosine + ATP = L-tyrosyl-tRNA(Tyr) + AMP + diphosphate + H(+). In terms of biological role, catalyzes the attachment of tyrosine to tRNA(Tyr) in a two-step reaction: tyrosine is first activated by ATP to form Tyr-AMP and then transferred to the acceptor end of tRNA(Tyr). This chain is Tyrosine--tRNA ligase, found in Treponema pallidum (strain Nichols).